The chain runs to 580 residues: uncharacterized protein (580 aa).

Disordered regions lie at residues 161-241, 256-281, 325-345, 472-495, and 544-564; these read SFSP…SVND, LGSL…SFSD, NVSH…QLLK, PRDT…DNSD, and SAVL…KEVR. Residues 192–203 are compositionally biased toward low complexity; the sequence is SNSNSSDTSTDD. 2 stretches are compositionally biased toward polar residues: residues 223–241 and 256–269; these read THSS…SVND and LGSL…TAQK. The span at 326 to 341 shows a compositional bias: basic and acidic residues; sequence VSHEEKSHSVQDDKSK. The segment covering 481-495 has biased composition (polar residues); it reads PNLSQSGNINSDNSD.

This is an uncharacterized protein from Schizosaccharomyces pombe (strain 972 / ATCC 24843) (Fission yeast).